The primary structure comprises 701 residues: Elongation factor G (701 aa).

One can recognise a tr-type G domain in the interval 6-285 (HKVRNIGIMA…AVVAYLPNPL (280 aa)). GTP contacts are provided by residues 15 to 22 (AHIDAGKT), 79 to 83 (DNPGH), and 133 to 136 (NKMD).

It belongs to the TRAFAC class translation factor GTPase superfamily. Classic translation factor GTPase family. EF-G/EF-2 subfamily.

The protein resides in the cytoplasm. Catalyzes the GTP-dependent ribosomal translocation step during translation elongation. During this step, the ribosome changes from the pre-translocational (PRE) to the post-translocational (POST) state as the newly formed A-site-bound peptidyl-tRNA and P-site-bound deacylated tRNA move to the P and E sites, respectively. Catalyzes the coordinated movement of the two tRNA molecules, the mRNA and conformational changes in the ribosome. This Micrococcus luteus (Micrococcus lysodeikticus) protein is Elongation factor G (fusA).